The chain runs to 116 residues: Large ribosomal subunit protein bL17 (116 aa).

Belongs to the bacterial ribosomal protein bL17 family. In terms of assembly, part of the 50S ribosomal subunit. Contacts protein L32.

The sequence is that of Large ribosomal subunit protein bL17 from Dictyoglomus turgidum (strain DSM 6724 / Z-1310).